The following is a 320-amino-acid chain: Aminoacyl tRNA synthase complex-interacting multifunctional protein 2 (320 aa).

Positions 82–162 are interaction with PRKN; it reads TPDADLDVTN…HTHSSVKSVP (81 aa). An interaction with TP53 region spans residues 162–225; sequence PENLLKCFGE…FLFSLFGQKH (64 aa). A GST C-terminal domain is found at 220–317; that stretch reads LFGQKHNAVN…NLAPFNTALK (98 aa).

Part of the multisynthetase complex (MSC), a multisubunit complex that groups tRNA ligases for Arg (RARS1), Asp (DARS1), Gln (QARS1), Ile (IARS1), Leu (LARS1), Lys (KARS1), Met (MARS1) the bifunctional ligase for Glu and Pro (EPRS1) and the auxiliary subunits AIMP1/p43, AIMP2/p38 and EEF1E1/p18. Interacts (via N-terminus) with KARS1. Interacts with EPRS1. Forms a linear complex that contains MARS1, EEF1E1, EPRS1 and AIMP2 that is at the core of the multisubunit complex. Binds FUBP1 (via C-terminus). Interacts in both its unphosphorylated and phosphorylated forms with p53/TP53 (via N-terminus) in the nucleus following UV irradiation. Interacts (via N-terminus) with PRKN/parkin (via first RING-type domain). Interacts with TARS3. Phosphorylated on serine residues in response to UV irradiation. In terms of processing, ubiquitinated by PRKN, leading to its degradation by the proteasome. Mutant PRKN fails to ubiquitinate AIMP2 efficiently, allowing its accumulation which may contribute to neurodegeneration associated with Parkinson disease.

Its subcellular location is the cytoplasm. It is found in the cytosol. It localises to the nucleus. In terms of biological role, required for assembly and stability of the aminoacyl-tRNA synthase complex. Mediates ubiquitination and degradation of FUBP1, a transcriptional activator of MYC, leading to MYC down-regulation which is required for aveolar type II cell differentiation. Blocks MDM2-mediated ubiquitination and degradation of p53/TP53. Functions as a proapoptotic factor. This chain is Aminoacyl tRNA synthase complex-interacting multifunctional protein 2 (AIMP2), found in Homo sapiens (Human).